The primary structure comprises 376 residues: Succinyl-diaminopimelate desuccinylase (376 aa).

Histidine 66 lines the Zn(2+) pocket. Aspartate 68 is an active-site residue. Aspartate 99 serves as a coordination point for Zn(2+). Glutamate 133 (proton acceptor) is an active-site residue. The Zn(2+) site is built by glutamate 134, glutamate 162, and histidine 348.

This sequence belongs to the peptidase M20A family. DapE subfamily. As to quaternary structure, homodimer. Zn(2+) is required as a cofactor. Requires Co(2+) as cofactor.

It carries out the reaction N-succinyl-(2S,6S)-2,6-diaminopimelate + H2O = (2S,6S)-2,6-diaminopimelate + succinate. The protein operates within amino-acid biosynthesis; L-lysine biosynthesis via DAP pathway; LL-2,6-diaminopimelate from (S)-tetrahydrodipicolinate (succinylase route): step 3/3. Functionally, catalyzes the hydrolysis of N-succinyl-L,L-diaminopimelic acid (SDAP), forming succinate and LL-2,6-diaminopimelate (DAP), an intermediate involved in the bacterial biosynthesis of lysine and meso-diaminopimelic acid, an essential component of bacterial cell walls. The polypeptide is Succinyl-diaminopimelate desuccinylase (Thioalkalivibrio sulfidiphilus (strain HL-EbGR7)).